Here is a 311-residue protein sequence, read N- to C-terminus: uncharacterized protein (311 aa).

Positions 1 to 12 (MPATDTNSTHTT) are enriched in polar residues. 2 disordered regions span residues 1–44 (MPAT…DEEH) and 205–268 (ERPS…ATVH). Positions 35–44 (TSDKHADEEH) are enriched in basic and acidic residues.

The protein belongs to the HHV-5 HKLF1 family.

This is an uncharacterized protein from Human cytomegalovirus (strain AD169) (HHV-5).